We begin with the raw amino-acid sequence, 215 residues long: Redox-sensing transcriptional repressor Rex (215 aa).

The segment at residues 18–57 (LYYRFLKNLHASGKQRVSSAELSDAVKVDSATIRRDFSYF) is a DNA-binding region (H-T-H motif). Residue 92–97 (GVGNLG) coordinates NAD(+).

This sequence belongs to the transcriptional regulatory Rex family. In terms of assembly, homodimer.

Its subcellular location is the cytoplasm. Modulates transcription in response to changes in cellular NADH/NAD(+) redox state. This is Redox-sensing transcriptional repressor Rex from Bacillus velezensis (strain DSM 23117 / BGSC 10A6 / LMG 26770 / FZB42) (Bacillus amyloliquefaciens subsp. plantarum).